The sequence spans 151 residues: Deoxyuridine 5'-triphosphate nucleotidohydrolase (151 aa).

Substrate is bound by residues 70–72 (RSG), asparagine 83, and 87–89 (TID).

The protein belongs to the dUTPase family. Mg(2+) serves as cofactor.

The catalysed reaction is dUTP + H2O = dUMP + diphosphate + H(+). It functions in the pathway pyrimidine metabolism; dUMP biosynthesis; dUMP from dCTP (dUTP route): step 2/2. In terms of biological role, this enzyme is involved in nucleotide metabolism: it produces dUMP, the immediate precursor of thymidine nucleotides and it decreases the intracellular concentration of dUTP so that uracil cannot be incorporated into DNA. The protein is Deoxyuridine 5'-triphosphate nucleotidohydrolase of Ruegeria pomeroyi (strain ATCC 700808 / DSM 15171 / DSS-3) (Silicibacter pomeroyi).